A 205-amino-acid chain; its full sequence is Octanoyltransferase (205 aa).

A BPL/LPL catalytic domain is found at 29–204 (AETPDEIWIV…HLLQQLDQKN (176 aa)). Substrate-binding positions include 68 to 75 (RGGQVTYH), 135 to 137 (ALG), and 148 to 150 (GVS). Cys-166 acts as the Acyl-thioester intermediate in catalysis.

It belongs to the LipB family.

It is found in the cytoplasm. It catalyses the reaction octanoyl-[ACP] + L-lysyl-[protein] = N(6)-octanoyl-L-lysyl-[protein] + holo-[ACP] + H(+). It functions in the pathway protein modification; protein lipoylation via endogenous pathway; protein N(6)-(lipoyl)lysine from octanoyl-[acyl-carrier-protein]: step 1/2. In terms of biological role, catalyzes the transfer of endogenously produced octanoic acid from octanoyl-acyl-carrier-protein onto the lipoyl domains of lipoate-dependent enzymes. Lipoyl-ACP can also act as a substrate although octanoyl-ACP is likely to be the physiological substrate. This is Octanoyltransferase from Dechloromonas aromatica (strain RCB).